Here is a 1213-residue protein sequence, read N- to C-terminus: Chitin synthase 3 (1213 aa).

Positions 1-97 (MSNFRDSSSP…TPPHQEEEED (97 aa)) are disordered. Over 1-168 (MSNFRDSSSP…KPKHDIYFWK (168 aa)) the chain is Cytoplasmic. The segment covering 32–44 (IRPERSRMDESHP) has biased composition (basic and acidic residues). Over residues 75–87 (ELSTSRSHLSNYA) the composition is skewed to polar residues. The helical transmembrane segment at 169–189 (VYCYAITFWAPAPLLKLFGLP) threads the bilayer. At 190–200 (TKDRQFAWREK) the chain is on the extracellular side. Residues 201–221 (IGLISCILYVGAFVAYLTFGF) form a helical membrane-spanning segment. Residues 222–450 (TKTVCSSQVV…TDTIGCIASK (229 aa)) lie on the Cytoplasmic side of the membrane. A helical transmembrane segment spans residues 451 to 471 (VVLYMSLVFILSVVVVKFIMA). Residues 472–1016 (CWFKWVTSRK…INSTVHNLFE (545 aa)) are Extracellular-facing. Residues asparagine 588 and asparagine 1008 are each glycosylated (N-linked (GlcNAc...) asparagine). A helical membrane pass occupies residues 1017–1037 (LVLVKDLCGTFCFSMQFVIFI). The Cytoplasmic portion of the chain corresponds to 1038–1039 (EL). A helical transmembrane segment spans residues 1040-1060 (IGTLVLPAAITFTIYVIIVAI). Residues 1061-1065 (VSKPT) are Extracellular-facing. A helical membrane pass occupies residues 1066-1086 (PVMSLVLLAVIFGLPGCLIVI). The Cytoplasmic segment spans residues 1087–1213 (TVSSLSYLVY…LSQGSSSGSS (127 aa)). The segment at 1161–1213 (ERRSTENRKQQQQQQLTNNSSNNLAVPGAAWDPSNTGGNLIDDLSQGSSSGSS) is disordered.

The protein belongs to the chitin synthase family. Class IV subfamily.

The protein localises to the cell membrane. It catalyses the reaction [(1-&gt;4)-N-acetyl-beta-D-glucosaminyl](n) + UDP-N-acetyl-alpha-D-glucosamine = [(1-&gt;4)-N-acetyl-beta-D-glucosaminyl](n+1) + UDP + H(+). In terms of biological role, polymerizes chitin, a structural polymer of the cell wall and septum, by transferring the sugar moiety of UDP-GlcNAc to the non-reducing end of the growing chitin polymer. The polypeptide is Chitin synthase 3 (CHS3) (Candida albicans (Yeast)).